Here is a 119-residue protein sequence, read N- to C-terminus: Large ribosomal subunit protein uL18 (119 aa).

The protein belongs to the universal ribosomal protein uL18 family. Part of the 50S ribosomal subunit; part of the 5S rRNA/L5/L18/L25 subcomplex. Contacts the 5S and 23S rRNAs.

Its function is as follows. This is one of the proteins that bind and probably mediate the attachment of the 5S RNA into the large ribosomal subunit, where it forms part of the central protuberance. The protein is Large ribosomal subunit protein uL18 of Clostridium tetani (strain Massachusetts / E88).